A 475-amino-acid chain; its full sequence is Adenosylhomocysteinase (475 aa).

3 residues coordinate substrate: T60, D133, and E198. 199–201 (TTT) is a binding site for NAD(+). Substrate contacts are provided by K228 and D232. NAD(+) is bound by residues N233, 262 to 267 (GYGDVG), E285, N320, 341 to 343 (IGH), and N389.

The protein belongs to the adenosylhomocysteinase family. NAD(+) serves as cofactor.

The protein localises to the cytoplasm. The catalysed reaction is S-adenosyl-L-homocysteine + H2O = L-homocysteine + adenosine. Its pathway is amino-acid biosynthesis; L-homocysteine biosynthesis; L-homocysteine from S-adenosyl-L-homocysteine: step 1/1. In terms of biological role, may play a key role in the regulation of the intracellular concentration of adenosylhomocysteine. This chain is Adenosylhomocysteinase, found in Syntrophotalea carbinolica (strain DSM 2380 / NBRC 103641 / GraBd1) (Pelobacter carbinolicus).